Consider the following 1234-residue polypeptide: ATP-dependent helicase/nuclease subunit A (1234 aa).

The region spanning 2-475 is the UvrD-like helicase ATP-binding domain; it reads TQFTTSQQAA…IILAENFRST (474 aa). An ATP-binding site is contributed by 23–30; the sequence is ASAGSGKT. A UvrD-like helicase C-terminal domain is found at 507–806; it reads YGALDYGDAH…KLMTIHKSKG (300 aa).

Belongs to the helicase family. AddA subfamily. As to quaternary structure, heterodimer of AddA and AddB/RexB. It depends on Mg(2+) as a cofactor.

It catalyses the reaction Couples ATP hydrolysis with the unwinding of duplex DNA by translocating in the 3'-5' direction.. It carries out the reaction ATP + H2O = ADP + phosphate + H(+). Its function is as follows. The heterodimer acts as both an ATP-dependent DNA helicase and an ATP-dependent, dual-direction single-stranded exonuclease. Recognizes the chi site generating a DNA molecule suitable for the initiation of homologous recombination. The AddA nuclease domain is required for chi fragment generation; this subunit has the helicase and 3' -&gt; 5' nuclease activities. The sequence is that of ATP-dependent helicase/nuclease subunit A from Lacticaseibacillus paracasei (strain ATCC 334 / BCRC 17002 / CCUG 31169 / CIP 107868 / KCTC 3260 / NRRL B-441) (Lactobacillus paracasei).